A 373-amino-acid polypeptide reads, in one-letter code: 3 beta-hydroxysteroid dehydrogenase/Delta 5--&gt;4-isomerase type 1 (373 aa).

Residues 10–15 (GAGGFL), Y155, and K159 contribute to the NADP(+) site. K159 functions as the Proton donor in the catalytic mechanism. A helical transmembrane segment spans residues 288–308 (VALLYWLGFLLELVSFLLRPV).

It belongs to the 3-beta-HSD family. High levels in adrenal gland, kidney and male liver. Low levels in female liver.

The protein resides in the endoplasmic reticulum membrane. It is found in the mitochondrion membrane. It carries out the reaction a 3beta-hydroxy-Delta(5)-steroid + NAD(+) = a 3-oxo-Delta(5)-steroid + NADH + H(+). It catalyses the reaction pregnenolone + NAD(+) = pregn-5-ene-3,20-dione + NADH + H(+). The catalysed reaction is 3beta-hydroxyandrost-5-en-17-one + NAD(+) = androst-5-ene-3,17-dione + NADH + H(+). The enzyme catalyses androst-5-en-3beta,17beta-diol + NAD(+) = 17beta-hydroxy-androst-5-en-3-one + NADH + H(+). It carries out the reaction a 3beta-hydroxysteroid + NADP(+) = a 3-oxosteroid + NADPH + H(+). It catalyses the reaction 5alpha-androstane-3beta,17beta-diol + NADP(+) = 17beta-hydroxy-5alpha-androstan-3-one + NADPH + H(+). The catalysed reaction is 3beta-hydroxy-5alpha-androstan-17-one + NADP(+) = 5alpha-androstan-3,17-dione + NADPH + H(+). The enzyme catalyses a 3-oxo-Delta(5)-steroid = a 3-oxo-Delta(4)-steroid. It carries out the reaction pregn-5-ene-3,20-dione = progesterone. It catalyses the reaction androst-5-ene-3,17-dione = androst-4-ene-3,17-dione. The catalysed reaction is 17beta-hydroxy-androst-5-en-3-one = testosterone. The enzyme catalyses 5alpha-androstane-3beta,17beta-diol + NAD(+) = 17beta-hydroxy-5alpha-androstan-3-one + NADH + H(+). It participates in steroid hormone biosynthesis. Its pathway is steroid metabolism. In terms of biological role, a bifunctional enzyme responsible for the oxidation and isomerization of 3beta-hydroxy-Delta(5)-steroid precursors to 3-oxo-Delta(4)-steroids, an essential step in steroid hormone biosynthesis. Specifically catalyzes the conversion of pregnenolone to progesterone, 17alpha-hydroxypregnenolone to 17alpha-hydroxyprogesterone, dehydroepiandrosterone (DHEA) to 4-androstenedione, and androstenediol to testosterone. Additionally, catalyzes the interconversion between 3beta-hydroxy and 3-oxo-5alpha-androstane steroids controlling the bioavalability of the active forms. Specifically converts dihydrotestosterone to its inactive form 5alpha-androstanediol, that does not bind androgen receptor/AR. Also converts androstanedione, a precursor of testosterone and estrone, to epiandrosterone. Expected to use NAD(+) as preferred electron donor for the 3-beta-hydroxy-steroid dehydrogenase activity and NADPH for the 3-ketosteroid reductase activity. The sequence is that of 3 beta-hydroxysteroid dehydrogenase/Delta 5--&gt;4-isomerase type 1 (HSD3B1) from Mesocricetus auratus (Golden hamster).